A 518-amino-acid polypeptide reads, in one-letter code: Light-independent protochlorophyllide reductase subunit B (518 aa).

Asp-36 contributes to the [4Fe-4S] cluster binding site. Catalysis depends on Asp-299, which acts as the Proton donor. 434–435 (GM) is a binding site for substrate.

The protein belongs to the ChlB/BchB/BchZ family. In terms of assembly, protochlorophyllide reductase is composed of three subunits; ChlL, ChlN and ChlB. Forms a heterotetramer of two ChlB and two ChlN subunits. It depends on [4Fe-4S] cluster as a cofactor.

The protein resides in the plastid. It localises to the chloroplast. The catalysed reaction is chlorophyllide a + oxidized 2[4Fe-4S]-[ferredoxin] + 2 ADP + 2 phosphate = protochlorophyllide a + reduced 2[4Fe-4S]-[ferredoxin] + 2 ATP + 2 H2O. It functions in the pathway porphyrin-containing compound metabolism; chlorophyll biosynthesis (light-independent). Functionally, component of the dark-operative protochlorophyllide reductase (DPOR) that uses Mg-ATP and reduced ferredoxin to reduce ring D of protochlorophyllide (Pchlide) to form chlorophyllide a (Chlide). This reaction is light-independent. The NB-protein (ChlN-ChlB) is the catalytic component of the complex. This chain is Light-independent protochlorophyllide reductase subunit B, found in Adiantum capillus-veneris (Maidenhair fern).